We begin with the raw amino-acid sequence, 333 residues long: Phosphate acyltransferase (333 aa).

The protein belongs to the PlsX family. In terms of assembly, homodimer. Probably interacts with PlsY.

The protein resides in the cytoplasm. It carries out the reaction a fatty acyl-[ACP] + phosphate = an acyl phosphate + holo-[ACP]. It participates in lipid metabolism; phospholipid metabolism. Catalyzes the reversible formation of acyl-phosphate (acyl-PO(4)) from acyl-[acyl-carrier-protein] (acyl-ACP). This enzyme utilizes acyl-ACP as fatty acyl donor, but not acyl-CoA. The sequence is that of Phosphate acyltransferase from Thermoanaerobacterium thermosaccharolyticum (strain ATCC 7956 / DSM 571 / NCIMB 9385 / NCA 3814 / NCTC 13789 / WDCM 00135 / 2032) (Clostridium thermosaccharolyticum).